The sequence spans 827 residues: Transcription factor SOX-6 (827 aa).

Over residues 1–10 (MSSKQATSPF) the composition is skewed to polar residues. The interval 1-51 (MSSKQATSPFACTADGEEAMTQDLTSREKEEGSDQHPASHLPLHPIMHNKP) is disordered. The span at 25-34 (TSREKEEGSD) shows a compositional bias: basic and acidic residues. Position 119 is a phosphothreonine (Thr119). A coiled-coil region spans residues 184–262 (LAEKERQLST…LLQQQIQVQG (79 aa)). 2 disordered regions span residues 334-361 (QINPRLKGISDRFGRNLDPSEHGGGHSY) and 379-470 (VSPG…PIGG). A compositionally biased stretch (basic and acidic residues) spans 341–357 (GISDRFGRNLDPSEHGG). Phosphoserine is present on Ser399. Position 401 is a phosphothreonine (Thr401). Residues Lys404 and Lys417 each participate in a glycyl lysine isopeptide (Lys-Gly) (interchain with G-Cter in SUMO) cross-link. Polar residues-rich tracts occupy residues 421 to 431 (TAQPLNLSSRP) and 439 to 461 (SPTSPTQNLFPASKTSPVNLPNK). Residues Ser439 and Ser442 each carry the phosphoserine modification. Residues 620–688 (IKRPMNAFMV…IHLEKYPNYK (69 aa)) constitute a DNA-binding region (HMG box). Disordered regions lie at residues 752–772 (TPSPQMTSDCSSTSASPEPSL) and 786–827 (ASLA…VSAN). Positions 795–808 (NGEDEMEAYDDYED) are enriched in acidic residues.

As to quaternary structure, homodimer. Interacts with DAZAP2. May interact with CENPK. Post-translationally, sumoylation inhibits the transcriptional activity. Highly expressed in testis.

The protein resides in the nucleus. The protein localises to the cytoplasm. Its function is as follows. Transcription factor that plays a key role in several developmental processes, including neurogenesis, chondrocytes differentiation and cartilage formation. Specifically binds the 5'-AACAAT-3' DNA motif present in enhancers and super-enhancers and promotes expression of genes important for chondrogenesis. Required for overt chondrogenesis when condensed prechondrocytes differentiate into early stage chondrocytes: SOX5 and SOX6 cooperatively bind with SOX9 on active enhancers and super-enhancers associated with cartilage-specific genes, and thereby potentiate SOX9's ability to transactivate. Not involved in precartilaginous condensation, the first step in chondrogenesis, during which skeletal progenitors differentiate into prechondrocytes. Together with SOX5, required to form and maintain a pool of highly proliferating chondroblasts between epiphyses and metaphyses, to form columnar chondroblasts, delay chondrocyte prehypertrophy but promote hypertrophy, and to delay terminal differentiation of chondrocytes on contact with ossification fronts. Binds to the proximal promoter region of the myelin protein MPZ gene, and is thereby involved in the differentiation of oligodendroglia in the developing spinal tube. Binds to the gene promoter of MBP and acts as a transcriptional repressor. In Mus musculus (Mouse), this protein is Transcription factor SOX-6.